We begin with the raw amino-acid sequence, 129 residues long: Glycine cleavage system H protein (129 aa).

The Lipoyl-binding domain occupies 24-106 (LLKIGVSEFA…IGEGWLVILK (83 aa)). At Lys65 the chain carries N6-lipoyllysine.

Belongs to the GcvH family. The glycine cleavage system is composed of four proteins: P, T, L and H. The cofactor is (R)-lipoate.

Its function is as follows. The glycine cleavage system catalyzes the degradation of glycine. The H protein shuttles the methylamine group of glycine from the P protein to the T protein. This chain is Glycine cleavage system H protein, found in Prochlorococcus marinus (strain MIT 9215).